We begin with the raw amino-acid sequence, 481 residues long: Cysteine--tRNA ligase (481 aa).

Cys-29 provides a ligand contact to Zn(2+). Positions 31-41 (PTVYDYSHLGH) match the 'HIGH' region motif. Residues Cys-210, His-235, and Glu-239 each coordinate Zn(2+). The 'KMSKS' region motif lies at 272 to 276 (KMSKS). Position 275 (Lys-275) interacts with ATP.

The protein belongs to the class-I aminoacyl-tRNA synthetase family. Monomer. Zn(2+) is required as a cofactor.

The protein resides in the cytoplasm. The catalysed reaction is tRNA(Cys) + L-cysteine + ATP = L-cysteinyl-tRNA(Cys) + AMP + diphosphate. The chain is Cysteine--tRNA ligase from Anaeromyxobacter sp. (strain K).